The primary structure comprises 547 residues: Chaperonin GroEL (547 aa).

Residues 30-33, Lys-51, 87-91, Gly-415, and Asp-496 contribute to the ATP site; these read TLGP and DGTTT. Residues 527-547 are disordered; that stretch reads ENTPDMPAMPPGGMGGMGGMY. A compositionally biased stretch (gly residues) spans 538-547; it reads GGMGGMGGMY.

The protein belongs to the chaperonin (HSP60) family. As to quaternary structure, forms a cylinder of 14 subunits composed of two heptameric rings stacked back-to-back. Interacts with the co-chaperonin GroES.

It localises to the cytoplasm. It catalyses the reaction ATP + H2O + a folded polypeptide = ADP + phosphate + an unfolded polypeptide.. Functionally, together with its co-chaperonin GroES, plays an essential role in assisting protein folding. The GroEL-GroES system forms a nano-cage that allows encapsulation of the non-native substrate proteins and provides a physical environment optimized to promote and accelerate protein folding. This is Chaperonin GroEL from Chlorobium phaeovibrioides (strain DSM 265 / 1930) (Prosthecochloris vibrioformis (strain DSM 265)).